A 553-amino-acid chain; its full sequence is CTP synthase (553 aa).

Residues 1–277 (MPTEPETDYD…DQYVMEELDI (277 aa)) form an amidoligase domain region. Position 26 (Ser26) interacts with CTP. Ser26 contacts UTP. Residues 27–32 (GLGKGI) and Asp84 each bind ATP. 2 residues coordinate Mg(2+): Asp84 and Glu152. Residues 159-161 (DIE), 198-203 (KTKPTQ), and Lys234 each bind CTP. UTP is bound by residues 198–203 (KTKPTQ) and Lys234. An ATP-binding site is contributed by Val252. In terms of domain architecture, Glutamine amidotransferase type-1 spans 307–544 (LVGKYDLEDA…LEAVLGDDPH (238 aa)). Gly364 serves as a coordination point for L-glutamine. Cys391 (nucleophile; for glutamine hydrolysis) is an active-site residue. L-glutamine-binding positions include 392-395 (LGFQ), Glu415, and Arg472. Active-site residues include His517 and Glu519.

It belongs to the CTP synthase family. Homotetramer.

It is found in the cytoplasm. The enzyme catalyses UTP + L-glutamine + ATP + H2O = CTP + L-glutamate + ADP + phosphate + 2 H(+). The catalysed reaction is L-glutamine + H2O = L-glutamate + NH4(+). It carries out the reaction UTP + NH4(+) + ATP = CTP + ADP + phosphate + 2 H(+). It participates in pyrimidine metabolism; CTP biosynthesis via de novo pathway; CTP from UDP: step 2/2. Its activity is regulated as follows. Allosterically activated by GTP, when glutamine is the substrate; GTP has no effect on the reaction when ammonia is the substrate. The allosteric effector GTP functions by stabilizing the protein conformation that binds the tetrahedral intermediate(s) formed during glutamine hydrolysis. Inhibited by the product CTP, via allosteric rather than competitive inhibition. Inhibited by 6-diazo-5-oxo-l-norleucine (DON). In terms of biological role, catalyzes the ATP-dependent amination of UTP to CTP with either L-glutamine or ammonia as the source of nitrogen. Regulates intracellular CTP levels through interactions with the four ribonucleotide triphosphates. The polypeptide is CTP synthase (Haloarcula hispanica (strain ATCC 33960 / DSM 4426 / JCM 8911 / NBRC 102182 / NCIMB 2187 / VKM B-1755)).